A 584-amino-acid chain; its full sequence is Leucine-rich repeat and fibronectin type III domain-containing protein 1 (584 aa).

The first 17 residues, 1–17, serve as a signal peptide directing secretion; that stretch reads MERLVFCVLVFGALAKA. Positions 18–51 constitute an LRRNT domain; the sequence is QLCPGRCICQTISPTLTLLCAKTGLLFVPPTVDR. Residues 18-494 lie on the Extracellular side of the membrane; it reads QLCPGRCICQ…VPSQFLGGTM (477 aa). 7 LRR repeats span residues 52–73, 76–97, 100–121, 124–145, 149–170, 173–194, and 197–218; these read KTVE…DFLN, SLVH…AFMG, SLRA…QLKG, NLRH…SFDE, TIED…AIAR, NINT…TFTL, and KLVR…TLFQ. Asn-73 is a glycosylation site (N-linked (GlcNAc...) asparagine). The 47-residue stretch at 241–287 folds into the LRRCT domain; the sequence is NPLHCNCELLWLRRLTREDDLETCASPEHLMDKYFWSIQEEEFICEP. In terms of domain architecture, Ig-like spans 288–375; that stretch reads PLITKHQVTK…GIATAAVHVH (88 aa). The cysteines at positions 310 and 359 are disulfide-linked. 5 N-linked (GlcNAc...) asparagine glycosylation sites follow: Asn-332, Asn-341, Asn-384, Asn-408, and Asn-421. Residues 393-414 are disordered; the sequence is DPGLSDISTSSRSSSNDSKTHS. Low complexity predominate over residues 397-409; sequence SDISTSSRSSSND. A helical membrane pass occupies residues 495 to 515; it reads IIIIGGIIVASVLVFIIILMI. Over 516 to 584 the chain is Cytoplasmic; that stretch reads RYKAYSGGGG…MVLPILHLLF (69 aa). A disordered region spans residues 539 to 564; the sequence is HVHSQTNGSRSAATKQSEEPPESPAG. Positions 540 to 553 are enriched in polar residues; it reads VHSQTNGSRSAATK.

Belongs to the LRFN family.

The protein resides in the membrane. Its subcellular location is the synapse. Involved in the regulation of excitatory synapses. The polypeptide is Leucine-rich repeat and fibronectin type III domain-containing protein 1 (lrfn1) (Danio rerio (Zebrafish)).